The sequence spans 152 residues: Homeobox protein ceh-63 (152 aa).

Polar residues predominate over residues Asn-21–Lys-30. Disordered regions lie at residues Asn-21–Phe-48 and Arg-92–Val-126. The span at Pro-35–Lys-44 shows a compositional bias: basic residues. The segment at residues Arg-41–Thr-100 is a DNA-binding region (homeobox). Over residues Pro-116 to Val-126 the composition is skewed to polar residues.

In terms of assembly, may interact with homeobox protein ceh-14.

It is found in the nucleus. Probable transcription factor, modulating expression of helix-loop-helix protein mbr-1, perhaps acting in concert with homeobox protein ceh-14. May play a minor role in axon guidance in the DVC interneuron. The sequence is that of Homeobox protein ceh-63 from Caenorhabditis elegans.